The sequence spans 592 residues: 2-succinyl-5-enolpyruvyl-6-hydroxy-3-cyclohexene-1-carboxylate synthase (592 aa).

This sequence belongs to the TPP enzyme family. MenD subfamily. Homodimer. Mg(2+) is required as a cofactor. It depends on Mn(2+) as a cofactor. The cofactor is thiamine diphosphate.

It catalyses the reaction isochorismate + 2-oxoglutarate + H(+) = 5-enolpyruvoyl-6-hydroxy-2-succinyl-cyclohex-3-ene-1-carboxylate + CO2. It functions in the pathway quinol/quinone metabolism; 1,4-dihydroxy-2-naphthoate biosynthesis; 1,4-dihydroxy-2-naphthoate from chorismate: step 2/7. Its pathway is quinol/quinone metabolism; menaquinone biosynthesis. Catalyzes the thiamine diphosphate-dependent decarboxylation of 2-oxoglutarate and the subsequent addition of the resulting succinic semialdehyde-thiamine pyrophosphate anion to isochorismate to yield 2-succinyl-5-enolpyruvyl-6-hydroxy-3-cyclohexene-1-carboxylate (SEPHCHC). This chain is 2-succinyl-5-enolpyruvyl-6-hydroxy-3-cyclohexene-1-carboxylate synthase, found in Leifsonia xyli subsp. xyli (strain CTCB07).